Consider the following 376-residue polypeptide: Chaperone protein DnaJ (376 aa).

The 66-residue stretch at aspartate 5–glycine 70 folds into the J domain. Residues glycine 137–glutamate 215 form a CR-type zinc finger. Cysteine 150, cysteine 153, cysteine 167, cysteine 170, cysteine 189, cysteine 192, cysteine 203, and cysteine 206 together coordinate Zn(2+). 4 CXXCXGXG motif repeats span residues cysteine 150–glycine 157, cysteine 167–glycine 174, cysteine 189–glycine 196, and cysteine 203–glycine 210.

It belongs to the DnaJ family. In terms of assembly, homodimer. Requires Zn(2+) as cofactor.

It localises to the cytoplasm. Participates actively in the response to hyperosmotic and heat shock by preventing the aggregation of stress-denatured proteins and by disaggregating proteins, also in an autonomous, DnaK-independent fashion. Unfolded proteins bind initially to DnaJ; upon interaction with the DnaJ-bound protein, DnaK hydrolyzes its bound ATP, resulting in the formation of a stable complex. GrpE releases ADP from DnaK; ATP binding to DnaK triggers the release of the substrate protein, thus completing the reaction cycle. Several rounds of ATP-dependent interactions between DnaJ, DnaK and GrpE are required for fully efficient folding. Also involved, together with DnaK and GrpE, in the DNA replication of plasmids through activation of initiation proteins. This is Chaperone protein DnaJ from Rhizobium leguminosarum bv. trifolii (strain WSM2304).